Here is a 625-residue protein sequence, read N- to C-terminus: 1-deoxy-D-xylulose-5-phosphate synthase (625 aa).

Thiamine diphosphate is bound by residues H80 and 121 to 123 (GHS). Mg(2+) is bound at residue D152. Thiamine diphosphate contacts are provided by residues 153-154 (GS), N181, Y290, and E371. N181 contacts Mg(2+).

The protein belongs to the transketolase family. DXPS subfamily. In terms of assembly, homodimer. The cofactor is Mg(2+). Thiamine diphosphate is required as a cofactor.

The catalysed reaction is D-glyceraldehyde 3-phosphate + pyruvate + H(+) = 1-deoxy-D-xylulose 5-phosphate + CO2. It participates in metabolic intermediate biosynthesis; 1-deoxy-D-xylulose 5-phosphate biosynthesis; 1-deoxy-D-xylulose 5-phosphate from D-glyceraldehyde 3-phosphate and pyruvate: step 1/1. In terms of biological role, catalyzes the acyloin condensation reaction between C atoms 2 and 3 of pyruvate and glyceraldehyde 3-phosphate to yield 1-deoxy-D-xylulose-5-phosphate (DXP). The protein is 1-deoxy-D-xylulose-5-phosphate synthase of Haemophilus influenzae (strain PittGG).